A 132-amino-acid polypeptide reads, in one-letter code: Mercuric resistance operon regulatory protein (132 aa).

The HTH merR-type domain occupies 2-71; sequence KFRIGELADK…LNEIDKLLGV (70 aa). A DNA-binding region (H-T-H motif) is located at residues 5-24; that stretch reads IGELADKCGVNKETIRYYER. Hg(2+) is bound by residues Cys79, Cys114, and Cys123.

As to quaternary structure, homodimer.

Functionally, mediates the mercuric-dependent induction of mercury resistance operon. In the absence of mercury MerR represses transcription by binding tightly to the mer operator region; when mercury is present the dimeric complex binds a single ion and becomes a potent transcriptional activator, while remaining bound to the mer site. This is Mercuric resistance operon regulatory protein (merR1) from Bacillus cereus.